The chain runs to 328 residues: Malate dehydrogenase (328 aa).

11–17 provides a ligand contact to NAD(+); that stretch reads GAAGQIG. Substrate contacts are provided by arginine 94 and arginine 100. NAD(+) is bound by residues asparagine 107, glutamine 114, and 131–133; that span reads VGN. Substrate is bound by residues asparagine 133 and arginine 164. Catalysis depends on histidine 189, which acts as the Proton acceptor.

It belongs to the LDH/MDH superfamily. MDH type 2 family.

The enzyme catalyses (S)-malate + NAD(+) = oxaloacetate + NADH + H(+). Functionally, catalyzes the reversible oxidation of malate to oxaloacetate. This Acinetobacter baumannii (strain SDF) protein is Malate dehydrogenase.